Here is a 148-residue protein sequence, read N- to C-terminus: Large ribosomal subunit protein uL11 (148 aa).

Positions 89-108 are disordered; the sequence is EKKKGSGAHKPGKEKVGQVT.

Belongs to the universal ribosomal protein uL11 family. As to quaternary structure, part of the ribosomal stalk of the 50S ribosomal subunit. Interacts with L10 and the large rRNA to form the base of the stalk. L10 forms an elongated spine to which L12 dimers bind in a sequential fashion forming a multimeric L10(L12)X complex. Post-translationally, one or more lysine residues are methylated.

In terms of biological role, forms part of the ribosomal stalk which helps the ribosome interact with GTP-bound translation factors. In Anaeromyxobacter sp. (strain Fw109-5), this protein is Large ribosomal subunit protein uL11.